Reading from the N-terminus, the 855-residue chain is MLTKRFYNLAIMQDISNHTPMIQQYLKIKSQYQDILLFYRMGDFYELFFDDAKKAAELLDITLTARGKSNGESIPMAGVPYHAAEAYIAKIVKKGLSIAICEQTGDPNTSKGPVERQVTRIITPATVSEEAFLDNNQDSILVSIFEKNNKYYLAYTSYTQGKIYLVKTLTSLNELKNTVLKLSPQEIITNSRELAQQNPFKKPIKALEEWYYSNFEAKKYINDSLDTNIANNILNLYKNDQLTTIGSILSYLTNILKDTPRHITDISYEQEQDTLNIDINSRINLELDNNSKSSLLSIIGKCKTSLGSRLLKRYFSNPTRNLNILATRHSIINSLGENQHFLKIQDVLSYISDIERIISRVALGTVKPKDLVALRYSLEQLPILKKLLSEKNTPEITNINNRIHQLDELVTLLDKAIIENPPTTIRDGGVIKEGFDKELDELKSIKDNSYDFLIKFEELQKQKIGISTLKVGYNRVHGYYIELSKQHADKIPTEYVRRQTLKASERYITEELKNFEDKVLSSKEKALAREKLIYDTLLKKVIEYYKQIQETAASIAEIDVLANFAERAIKLKLSQPKFNNLAKLELKEVRHLAIEHNIDEPFIPNDTLLSKDTNTLQIITGPNMGGKSTYMRQVAQLIFLAYIGSFVPASYADICDIDTIYTRIGASDDISSGRSTFMVEMTETAYILNNASAKSLVIMDEIGRGTSTFDGLALAKACAEKFAQMGAFTLFATHYFELTELAKQYPNVCNIHFEAKEYKDNIYFMHKAVTGAAKKSYGIQVAKLAGISQDVLESAKQNLYNLEKKQQLTESTQVQAQFQLEPTTQNPLQQKLDAIDINTITPLEALNILFELKKR.

Position 621–628 (621–628) interacts with ATP; sequence GPNMGGKS.

It belongs to the DNA mismatch repair MutS family.

This protein is involved in the repair of mismatches in DNA. It is possible that it carries out the mismatch recognition step. This protein has a weak ATPase activity. The chain is DNA mismatch repair protein MutS from Francisella tularensis subsp. holarctica (strain OSU18).